A 406-amino-acid chain; its full sequence is Ubiquitin-associated domain-containing protein 1 (406 aa).

The Ubiquitin-like domain occupies 14–98 (LRLHICSLDG…LLLVKKRAPP (85 aa)). A disordered region spans residues 95–122 (RAPPPTPKMAEVSADEKRKQDQKAPDKD). Residues 108–122 (ADEKRKQDQKAPDKD) show a composition bias toward basic and acidic residues. The 46-residue stretch at 186–231 (EDDEDRVDEVALRQLTEMGFPESRAVKALRLNHMSVTQAMEWLIEH) folds into the UBA 1 domain. Positions 238–257 (DAPLPCENSSEAAGGLATGE) are enriched in low complexity. The disordered stretch occupies residues 238–272 (DAPLPCENSSEAAGGLATGEAETKPTLGAGAEDPK). The region spanning 289 to 329 (RPDPRAVIALMEMGFDEKEVIDALRVNNNQQDAACEWLLGD) is the UBA 2 domain. An STI1 domain is found at 354–393 (NPVVQLGLTNPKTLLAFEDMLENPLNSTQWMNDPETGPVM).

As to quaternary structure, component of the KPC complex.

It is found in the cytoplasm. It participates in protein modification; protein ubiquitination. Functionally, non-catalytic component of the KPC complex, a E3 ubiquitin-protein ligase complex that mediates polyubiquitination of target proteins, such as CDKN1B and NFKB1. Within the KPC complex, UBAC1 acts as an adapter that promotes the transfer of target proteins that have been polyubiquitinated by RNF123/KPC1 to the 26S proteasome. This chain is Ubiquitin-associated domain-containing protein 1 (ubac1), found in Xenopus tropicalis (Western clawed frog).